A 156-amino-acid chain; its full sequence is Small ribosomal subunit protein uS7 (156 aa).

It belongs to the universal ribosomal protein uS7 family. As to quaternary structure, part of the 30S ribosomal subunit. Contacts proteins S9 and S11.

In terms of biological role, one of the primary rRNA binding proteins, it binds directly to 16S rRNA where it nucleates assembly of the head domain of the 30S subunit. Is located at the subunit interface close to the decoding center, probably blocks exit of the E-site tRNA. The sequence is that of Small ribosomal subunit protein uS7 from Mesorhizobium japonicum (strain LMG 29417 / CECT 9101 / MAFF 303099) (Mesorhizobium loti (strain MAFF 303099)).